A 469-amino-acid polypeptide reads, in one-letter code: RNA-editing ligase 1, mitochondrial (469 aa).

Residues 1-44 constitute a mitochondrion transit peptide; sequence MQLQRLGAPLLKRLVGGCIRQSTAPIMPCVVVSGSGGFLTPVRT. Residues 59–61, 86–92, N92, R111, E159, F209, and 307–309 each bind ATP; these read IEI, EKVHGTN, and KLR. K87 (N6-AMP-lysine intermediate) is an active-site residue. Positions 450-469 are disordered; that stretch reads AAAQSEAIPPLSPAAPTKGE.

Belongs to the RNA ligase 2 family. As to quaternary structure, component of the RNA editing complex (editosome), a 1600 kDa complex composed of at least 20 proteins. Interacts with terminal uridylyltransferase MEAT1.

Its subcellular location is the mitochondrion. The enzyme catalyses ATP + (ribonucleotide)n-3'-hydroxyl + 5'-phospho-(ribonucleotide)m = (ribonucleotide)n+m + AMP + diphosphate.. Functionally, essential for RNA editing. RNA editing in kinetoplastid mitochondria inserts and deletes uridylates at multiple sites in pre-mRNAs as directed by guide RNAs. The polypeptide is RNA-editing ligase 1, mitochondrial (REL1) (Trypanosoma brucei brucei (strain 927/4 GUTat10.1)).